We begin with the raw amino-acid sequence, 695 residues long: MDKVLNREESMELMDLLGLERAAWGNLPLMRKAYLRKCKEFHPDKGGDEDKMKRMNTLYKKMEQDVKVAHQPDFGTWSSSEVPTYGTEEWESWWSSFNEKWDEDLFCHEDMFASDEEATADSQHSTPPKKKRKVEDPKDFPSDLHQFLSQAVFSNRTLACFAVYTTKEKAQILYKKLMEKYSVTFISRHMCAGHNIIFFLTPHRHRVSAINNFCQKLCTFSFLICKGVNKEYLLYSALTRDPYHTIEESIQGGLKEHDFSPEEPEETKQVSWKLITEYAVETKCEDVFLLLGMYLEFQYNVEECKKCQKKDQPYHFKYHEKHFANAIIFAESKNQKSICQQAVDTVLAKKRVDTLHMTREEMLTERFNHILDKMDLIFGAHGNAVLEQYMAGVAWLHCLLPKMDSVIFDFLHCIVFNVPKRRYWLFKGPIDSGKTTLAAGLLDLCGGKALNVNLPMERLTFELGVAIDQYMVVFEDVKGTGAESKDLPSGHGINNLDSLRDYLDGSVKVNLEKKHLNKRTQIFPPGLVTMNEYPVPKTLQARFVRQIDFRPKIYLRKSLQNSEFLLEKRILQSGMTLLLLLIWFRPVADFATDIQSRIVEWKERLDSEISMYTFSRMKYNICMGKCILDITREEDSETEDSGHGSSTESQSQCSSQVSDTSAPAEDSQRSDPHSQELHLCKGFQCFKRPKTPPPK.

An N-acetylmethionine; by host modification is found at Met1. A J domain is found at 12 to 75; the sequence is ELMDLLGLER…VKVAHQPDFG (64 aa). The binding to host RB1 protein and transforming activity stretch occupies residues 105 to 109; sequence LFCHE. Ser114, Ser122, and Ser125 each carry phosphoserine; by host. A disordered region spans residues 117–138; it reads EATADSQHSTPPKKKRKVEDPK. Thr126 is modified (phosphothreonine; by host). The short motif at 127–134 is the Nuclear localization signal element; sequence PPKKKRKV. Residues 141-256 constitute a DNA-binding region (T-ag OBD); the sequence is PSDLHQFLSQ…EESIQGGLKE (116 aa). Residues 267–359 form a T-ag D1-type zinc finger; sequence TKQVSWKLIT…KRVDTLHMTR (93 aa). Residues Cys304, Cys307, His315, and His319 each contribute to the Zn(2+) site. An SF3 helicase domain is found at 402 to 562; the sequence is KMDSVIFDFL…IYLRKSLQNS (161 aa). 428 to 435 serves as a coordination point for ATP; that stretch reads GPIDSGKT. The disordered stretch occupies residues 634-695; it reads EDSETEDSGH…FKRPKTPPPK (62 aa). Residues 645–661 are compositionally biased toward low complexity; sequence SSTESQSQCSSQVSDTS. A compositionally biased stretch (basic and acidic residues) spans 666-679; that stretch reads DSQRSDPHSQELHL. The residue at position 687 (Lys687) is an N6-acetyllysine; by host. Thr691 is subject to Phosphothreonine; by host.

In terms of assembly, forms homohexamers in the presence of ATP. Interacts with host HDAC1. Interacts (via LXCXE domain) with host RB1; the interaction induces the aberrant dissociation of RB1-E2F1 complex thereby disrupting RB1's activity. Interacts (via LXCXE domain) with host pRB-related proteins RBL1 and RBL2. Interacts (via C-terminus) with host TOP1 and POLA1 allowing DNA replication. Interacts with host TP53, inhibiting TP53 binding to DNA. Interacts with host preinitiation complex components TBP, TFIIA and TFIID to regulate transcription initiation. Mg(2+) serves as cofactor. Phosphorylated on both serine and threonine residues. Small t antigen inhibits the dephosphorylation by the AC form of PP2A. In terms of processing, O-Glycosylated near the C-terminal region. Post-translationally, acetylated by CBP in a TP53-dependent manner.

The protein localises to the host nucleus. It carries out the reaction Couples ATP hydrolysis with the unwinding of duplex DNA by translocating in the 3'-5' direction.. The catalysed reaction is ATP + H2O = ADP + phosphate + H(+). Isoform large T antigen is a key early protein essential for both driving viral replication and inducing cellular transformation. Plays a role in viral genome replication by driving entry of quiescent cells into the cell cycle and by autoregulating the synthesis of viral early mRNA. Displays highly oncogenic activities by corrupting the host cellular checkpoint mechanisms that guard cell division and the transcription, replication, and repair of DNA. Participates in the modulation of cellular gene expression preceeding viral DNA replication. This step involves binding to host key cell cycle regulators retinoblastoma protein RB1/pRb and TP53. Induces the disassembly of host E2F1 transcription factors from RB1, thus promoting transcriptional activation of E2F1-regulated S-phase genes. Inhibits host TP53 binding to DNA, abrogating the ability of TP53 to stimulate gene expression. Plays the role of a TFIID-associated factor (TAF) in transcription initiation for all three RNA polymerases, by stabilizing the TBP-TFIIA complex on promoters. Initiates viral DNA replication and unwinding via interactions with the viral origin of replication. Binds two adjacent sites in the SV40 origin. The replication fork movement is facilitated by Large T antigen helicase activity. Has processive 3'-5' DNA helicase activity which requires a short 3' single-stranded region and ATP. Activates the transcription of viral late mRNA, through host TBP and TFIIA stabilization. Interferes with histone deacetylation mediated by HDAC1, leading to activation of transcription. The sequence is that of Large T antigen from BK polyomavirus (BKPyV).